We begin with the raw amino-acid sequence, 359 residues long: DNA integrity scanning protein DisA (359 aa).

One can recognise a DAC domain in the interval 7–146 (DDIFRATLAA…GRRYVLDGSA (140 aa)). Residues Gly74, Leu92, and 105-109 (TRHRT) contribute to the ATP site.

It belongs to the DisA family. As to quaternary structure, homooctamer. Mg(2+) serves as cofactor.

The enzyme catalyses 2 ATP = 3',3'-c-di-AMP + 2 diphosphate. Functionally, participates in a DNA-damage check-point that is active prior to asymmetric division when DNA is damaged. DisA forms globular foci that rapidly scan along the chromosomes during sporulation, searching for lesions. When a lesion is present, DisA pauses at the lesion site. This triggers a cellular response that culminates in a temporary block in sporulation initiation. Also has diadenylate cyclase activity, catalyzing the condensation of 2 ATP molecules into cyclic di-AMP (c-di-AMP). c-di-AMP acts as a signaling molecule that couples DNA integrity with progression of sporulation. The rise in c-di-AMP level generated by DisA while scanning the chromosome, operates as a positive signal that advances sporulation; upon encountering a lesion, the DisA focus arrests at the damaged site and halts c-di-AMP synthesis. The chain is DNA integrity scanning protein DisA from Frankia casuarinae (strain DSM 45818 / CECT 9043 / HFP020203 / CcI3).